The sequence spans 438 residues: MKLWGGRFKKSESKLMEDFNSSLSFDRQLYKEDIEGSMVHVKMLAKCNILSSEESKAILSGLESILKDIEEGKLEVEGDYEDIHSFVEINLIERIGQVAKKLHTARSRNDQVALDFRLYAKRKALEVVENIEYLQDVIENLGDKNNVIMPGYTHLQRAQVVTFKHHIMAYYHMFKRDRERILNAICIMDESPLGCCALAGTTYNIDRNFTAQELGFKKPVDNFLDGVSDRDYVIELISDFSIIMMHLSRLSEELILWSSKEFDFIRIDDEFSTGSSIMPQKKNPDAAELIRGKTGRVYGSLVSLLTTMKGIPLAYNKDMQEDKEQLFNSLDTVLSCLKIMSGMLSTLKVNEKNTFNAVKKGFLNATEAADYLVNKGMAFRDAHKVIGEIVLYCEDKNRAIEDISLDELKKFSSLFEEDVYDFIDYENTINRGIKRNLK.

This sequence belongs to the lyase 1 family. Argininosuccinate lyase subfamily.

Its subcellular location is the cytoplasm. The catalysed reaction is 2-(N(omega)-L-arginino)succinate = fumarate + L-arginine. It functions in the pathway amino-acid biosynthesis; L-arginine biosynthesis; L-arginine from L-ornithine and carbamoyl phosphate: step 3/3. The polypeptide is Argininosuccinate lyase (Clostridium kluyveri (strain NBRC 12016)).